A 354-amino-acid polypeptide reads, in one-letter code: Uroporphyrinogen decarboxylase (354 aa).

Substrate is bound by residues 27–31 (RQAGR), aspartate 77, tyrosine 154, threonine 209, and histidine 327.

The protein belongs to the uroporphyrinogen decarboxylase family. Homodimer.

The protein resides in the cytoplasm. It catalyses the reaction uroporphyrinogen III + 4 H(+) = coproporphyrinogen III + 4 CO2. It participates in porphyrin-containing compound metabolism; protoporphyrin-IX biosynthesis; coproporphyrinogen-III from 5-aminolevulinate: step 4/4. Catalyzes the decarboxylation of four acetate groups of uroporphyrinogen-III to yield coproporphyrinogen-III. This Escherichia coli O6:K15:H31 (strain 536 / UPEC) protein is Uroporphyrinogen decarboxylase.